Consider the following 118-residue polypeptide: Large ribosomal subunit protein bL20 (118 aa).

It belongs to the bacterial ribosomal protein bL20 family.

Its function is as follows. Binds directly to 23S ribosomal RNA and is necessary for the in vitro assembly process of the 50S ribosomal subunit. It is not involved in the protein synthesizing functions of that subunit. The protein is Large ribosomal subunit protein bL20 of Lachnoclostridium phytofermentans (strain ATCC 700394 / DSM 18823 / ISDg) (Clostridium phytofermentans).